Reading from the N-terminus, the 486-residue chain is Glutamyl-tRNA(Gln) amidotransferase subunit A (486 aa).

Catalysis depends on charge relay system residues Lys77 and Ser152. Ser176 functions as the Acyl-ester intermediate in the catalytic mechanism.

Belongs to the amidase family. GatA subfamily. As to quaternary structure, heterotrimer of A, B and C subunits.

The catalysed reaction is L-glutamyl-tRNA(Gln) + L-glutamine + ATP + H2O = L-glutaminyl-tRNA(Gln) + L-glutamate + ADP + phosphate + H(+). Allows the formation of correctly charged Gln-tRNA(Gln) through the transamidation of misacylated Glu-tRNA(Gln) in organisms which lack glutaminyl-tRNA synthetase. The reaction takes place in the presence of glutamine and ATP through an activated gamma-phospho-Glu-tRNA(Gln). This Lactococcus lactis subsp. cremoris (strain SK11) protein is Glutamyl-tRNA(Gln) amidotransferase subunit A.